The following is a 789-amino-acid chain: Disintegrin and metalloproteinase domain-containing protein 1 (789 aa).

Residues 1-68 form the signal peptide; that stretch reads MSVAASASRS…LLIFLPSTLC (68 aa). Residues 238–432 form the Peptidase M12B domain; it reads KYVEMFVVVN…HRGACLLDRP (195 aa). N-linked (GlcNAc...) asparagine glycosylation is present at Asn259. 4 disulfides stabilise this stretch: Cys348-Cys427, Cys388-Cys411, Cys390-Cys396, and Cys497-Cys517. Position 373 (His373) interacts with Zn(2+). Glu374 is a catalytic residue. Zn(2+) contacts are provided by His377 and His383. A glycan (N-linked (GlcNAc...) asparagine) is linked at Asn410. One can recognise a Disintegrin domain in the interval 441 to 525; the sequence is DAHCGNGVVE…ECPANSYMQD (85 aa). An N-linked (GlcNAc...) asparagine glycan is attached at Asn633. One can recognise an EGF-like domain in the interval 666–700; it reads LQYDCHPQEMCHGNGVCNNFKHCHCDAGFSPPDCS. Intrachain disulfides connect Cys670/Cys682, Cys676/Cys688, and Cys690/Cys699. The N-linked (GlcNAc...) asparagine glycan is linked to Asn720. Residues 743–763 traverse the membrane as a helical segment; it reads VVVLVVPIFLIVLLCCLMLIA. Topologically, residues 764 to 789 are cytoplasmic; it reads YLWSEVQEAVSPGSSSTTSSSESESD.

In terms of assembly, heterodimer with ADAM2/fertilin subunit beta.

It localises to the membrane. In terms of biological role, may be involved in sperm-egg fusion. This is Disintegrin and metalloproteinase domain-containing protein 1 (Adam1) from Rattus norvegicus (Rat).